Reading from the N-terminus, the 862-residue chain is S-layer protein EA1 (862 aa).

An N-terminal signal peptide occupies residues 1 to 29; the sequence is MAKTNSYKKVIAGTMTAAMVAGIVSPVAA. 3 SLH domains span residues 30 to 93, 94 to 151, and 152 to 214; these read AGKS…NAQP, SFKD…KVNG, and ELVT…DNAQ.

Its subcellular location is the secreted. It is found in the cell wall. It localises to the S-layer. Functionally, the S-layer is a paracrystalline mono-layered assembly of proteins which coat the surface of bacteria. This chain is S-layer protein EA1 (eag), found in Bacillus anthracis.